A 408-amino-acid polypeptide reads, in one-letter code: Phosphoglycerate kinase (408 aa).

Residues 22–24 (DIN), arginine 39, 60–63 (HQSR), arginine 117, and arginine 157 each bind substrate. Residues glutamate 332 and 358–361 (GGHT) each bind ATP.

The protein belongs to the phosphoglycerate kinase family. As to quaternary structure, monomer.

The protein resides in the cytoplasm. The enzyme catalyses (2R)-3-phosphoglycerate + ATP = (2R)-3-phospho-glyceroyl phosphate + ADP. It participates in carbohydrate degradation; glycolysis; pyruvate from D-glyceraldehyde 3-phosphate: step 2/5. The polypeptide is Phosphoglycerate kinase (pgk) (Thermoplasma acidophilum (strain ATCC 25905 / DSM 1728 / JCM 9062 / NBRC 15155 / AMRC-C165)).